Here is a 360-residue protein sequence, read N- to C-terminus: G-protein coupled receptor 183 (360 aa).

Over Met1–Arg30 the chain is Extracellular. Asn7 is a glycosylation site (N-linked (GlcNAc...) asparagine). Residues Ile31–Ile56 form a helical membrane-spanning segment. The Cytoplasmic segment spans residues Gln57–Asp76. A helical membrane pass occupies residues Ile77 to Phe94. Arg86 is a 7alpha,25-dihydroxycholesterol binding site. Residues Asp95–Arg104 are Extracellular-facing. Cys103 and Cys180 form a disulfide bridge. Residues Ile105–Ile126 traverse the membrane as a helical segment. 7alpha,25-dihydroxycholesterol-binding residues include Tyr111 and Tyr115. Residues Ser125 to Val133 are interaction with G proteins. Over Asp127 to Lys148 the chain is Cytoplasmic. Residues Cys149–Ile167 traverse the membrane as a helical segment. The Extracellular segment spans residues Asn168–Ser191. Residues Leu192–Cys214 traverse the membrane as a helical segment. Residues Tyr215 to Lys240 lie on the Cytoplasmic side of the membrane. The helical transmembrane segment at Ala241–Ile264 threads the bilayer. 7alpha,25-dihydroxycholesterol is bound at residue Tyr259. The Extracellular segment spans residues Gln265–Gln286. Residues Ile287–Cys311 traverse the membrane as a helical segment. The Cytoplasmic portion of the chain corresponds to Lys312–Lys360. Phosphoserine is present on Ser327. The segment at Glu339–Lys360 is disordered. The segment covering Glu347–Lys360 has biased composition (polar residues).

Belongs to the G-protein coupled receptor 1 family. In terms of assembly, homodimer and heterodimer. Heterodimerizes with CXCR5; leading to modulate the interaction between of CXCL13 and CXCR5.

Its subcellular location is the cell membrane. G-protein coupled receptor expressed in lymphocytes that acts as a chemotactic receptor for B-cells, T-cells, splenic dendritic cells, monocytes/macrophages and astrocytes. Receptor for oxysterol 7-alpha,25-dihydroxycholesterol (7-alpha,25-OHC) and other related oxysterols. Mediates cell positioning and movement of a number of cells by binding the 7-alpha,25-OHC ligand that forms a chemotactic gradient. Binding of 7-alpha,25-OHC mediates the correct localization of B-cells during humoral immune responses. Guides B-cell movement along the B-cell zone-T-cell zone boundary and later to interfollicular and outer follicular regions. Its specific expression during B-cell maturation helps position B-cells appropriately for mounting T-dependent antibody responses. Collaborates with CXCR5 to mediate B-cell migration; probably by forming a heterodimer with CXCR5 that affects the interaction between of CXCL13 and CXCR5. Also acts as a chemotactic receptor for some T-cells upon binding to 7-alpha,25-OHC ligand. Promotes follicular helper T (Tfh) cells differentiation by positioning activated T-cells at the follicle-T-zone interface, promoting contact of newly activated CD4 T-cells with activated dendritic cells and exposing them to Tfh-cell-promoting inducible costimulator (ICOS) ligand. Expression in splenic dendritic cells is required for their homeostasis, localization and ability to induce B- and T-cell responses: GPR183 acts as a chemotactic receptor in dendritic cells that mediates the accumulation of CD4(+) dendritic cells in bridging channels. Regulates migration of astrocytes and is involved in communication between astrocytes and macrophages. Promotes osteoclast precursor migration to bone surfaces. Signals constitutively through G(i)-alpha, but not G(s)-alpha or G(q)-alpha. Signals constitutively also via MAPK1/3 (ERK1/2). This Bos taurus (Bovine) protein is G-protein coupled receptor 183 (GPR183).